Here is a 395-residue protein sequence, read N- to C-terminus: Imidazolonepropionase (395 aa).

Fe(3+) contacts are provided by His-72 and His-74. Positions 72 and 74 each coordinate Zn(2+). 4-imidazolone-5-propanoate is bound by residues Arg-81, Tyr-144, and His-174. Tyr-144 contributes to the N-formimidoyl-L-glutamate binding site. His-231 is a binding site for Fe(3+). His-231 serves as a coordination point for Zn(2+). Glu-234 is a binding site for 4-imidazolone-5-propanoate. Residue Asp-306 coordinates Fe(3+). Asp-306 contacts Zn(2+).

This sequence belongs to the metallo-dependent hydrolases superfamily. HutI family. The cofactor is Zn(2+). It depends on Fe(3+) as a cofactor.

It localises to the cytoplasm. It catalyses the reaction 4-imidazolone-5-propanoate + H2O = N-formimidoyl-L-glutamate. The protein operates within amino-acid degradation; L-histidine degradation into L-glutamate; N-formimidoyl-L-glutamate from L-histidine: step 3/3. Functionally, catalyzes the hydrolytic cleavage of the carbon-nitrogen bond in imidazolone-5-propanoate to yield N-formimidoyl-L-glutamate. It is the third step in the universal histidine degradation pathway. In Pyrobaculum arsenaticum (strain DSM 13514 / JCM 11321 / PZ6), this protein is Imidazolonepropionase.